Reading from the N-terminus, the 636-residue chain is Zinc finger protein 90 (636 aa).

A KRAB domain is found at 14–85; sequence VTFKDVAVNF…EKEIQRPFCP (72 aa). C2H2-type zinc fingers lie at residues 208 to 230, 250 to 272, 278 to 300, 306 to 328, 334 to 356, 362 to 384, and 390 to 412; these read YKCD…EKIH, HECA…QRIH, FECN…ENAH, YQCS…QRIH, YRCN…EVTH, FQCK…ERTH, and FECS…MRIH. The disordered stretch occupies residues 227-247; that stretch reads EKIHKGDPYSNGTDQGAQSGR. Lysine 444 participates in a covalent cross-link: Glycyl lysine isopeptide (Lys-Gly) (interchain with G-Cter in SUMO2). 6 consecutive C2H2-type zinc fingers follow at residues 446 to 468, 494 to 516, 522 to 544, 550 to 572, 578 to 600, and 606 to 628; these read YHCN…QRLH, YQCN…HRIH, YECN…ERTH, YECI…ERTH, YECN…QRTH, and YACK…HRVH.

It belongs to the krueppel C2H2-type zinc-finger protein family. As to quaternary structure, interacts (via N- and C-termini) with REST (via zinc-finger DNA-binding domain); the interaction inhibits REST repressor activity. As to expression, brain, spleen, thymus, and testis. Expressed in heart.

The protein resides in the nucleus. Inhibits the transcriptional repressor activity of REST by inhibiting its binding to DNA, thereby derepressing transcription of REST target genes. The polypeptide is Zinc finger protein 90 (Zfp90) (Mus musculus (Mouse)).